Here is a 757-residue protein sequence, read N- to C-terminus: MDVNPTLLFLKVPAQNAISTTFPYTGDPPYSHGTGTGYTMDTVNRTHQYSEKGKWTTNTETGAPQLNPIDGPLPEDNEPSGYAQTDCVLEAMAFLEESHPGIFENSCLETMEVVQQTRVDKLTQGRQTYDWTLNRNQPAATALANTIEVFRSNGLTANESGRLIDFLKDVMESMDKEEIEITTHFQRKRRVRDNMTKKMVTQRTIGKKKQRVNKRSYLIRALTLNTMTKDAERGKLKRRAIATPGMQIRGFVYFVETLARSICEKLEQSGLPVGGNEKKAKLANVVRKMMTNSQDTELSFTITGDNTKWNENQNPRMFLAMITYITKNQPEWFRNILSIAPIMFSNKMARLGKGYMFESKRMKLRTQIPAEMLASIDLKYFNESTRKKIEKIRPLLIDGTASLSPGMMMGMFNMLSTVLGVSILNLGQKKYTKTTYWWDGLQSSDDFALIVNAPNHEGIQAGVDRFYRTCKLVGINMSKKKSYINKTGTFEFTSFFYRYGFVANFSMELPSFGVSGINESADMSIGVTVIKNNMINNDLGPATAQMALQLFIKDYRYTYRCHRGDTQIQTRRSFELKKLWEQTQSKAGLLVSDGGPNLYNIRNLHIPEVCLKWELMDEDYQGRLCNPLNPFVSHKEIESVNNAVVMPAHGPAKSMEYDAVATTHSWIPKRNRSILNTSQRGILEDEQMYQKCCNLFEKFFPSSSYRRPVGISSMVEAMVSRARIDARIDFESGRIKKEEFSEIMKICSTIEELRRQK.

The tract at residues 50 to 82 (SEKGKWTTNTETGAPQLNPIDGPLPEDNEPSGY) is disordered. Polar residues predominate over residues 55–64 (WTTNTETGAP). Short sequence motifs (nuclear localization signal) lie at residues 187-195 (RKRRVRDNM) and 203-216 (RTIG…NKRS). A promoter-binding site region spans residues 249–256 (RGFVYFVE). The RdRp catalytic domain occupies 286 to 483 (VRKMMTNSQD…GINMSKKKSY (198 aa)).

It belongs to the influenza viruses polymerase PB1 family. Influenza RNA polymerase is composed of three subunits: PB1, PB2 and PA. Interacts (via N-terminus) with PA (via C-terminus). Interacts (via C-terminus) with PB2 (via N-terminus); this interaction is essential for transcription initiation. In terms of processing, phosphorylated by host PRKCA.

Its subcellular location is the host nucleus. The protein localises to the host cytoplasm. It carries out the reaction RNA(n) + a ribonucleoside 5'-triphosphate = RNA(n+1) + diphosphate. RNA-dependent RNA polymerase which is responsible for replication and transcription of virus RNA segments. The transcription of viral mRNAs occurs by a unique mechanism called cap-snatching. 5' methylated caps of cellular mRNAs are cleaved after 10-13 nucleotides by PA. In turn, these short capped RNAs are used as primers by PB1 for transcription of viral mRNAs. During virus replication, PB1 initiates RNA synthesis and copy vRNA into complementary RNA (cRNA) which in turn serves as a template for the production of more vRNAs. The protein is RNA-directed RNA polymerase catalytic subunit of Aves (whales).